The chain runs to 455 residues: Probable glycine dehydrogenase (decarboxylating) subunit 1 (455 aa).

The protein belongs to the GcvP family. N-terminal subunit subfamily. The glycine cleavage system is composed of four proteins: P, T, L and H. In this organism, the P 'protein' is a heterodimer of two subunits.

It catalyses the reaction N(6)-[(R)-lipoyl]-L-lysyl-[glycine-cleavage complex H protein] + glycine + H(+) = N(6)-[(R)-S(8)-aminomethyldihydrolipoyl]-L-lysyl-[glycine-cleavage complex H protein] + CO2. In terms of biological role, the glycine cleavage system catalyzes the degradation of glycine. The P protein binds the alpha-amino group of glycine through its pyridoxal phosphate cofactor; CO(2) is released and the remaining methylamine moiety is then transferred to the lipoamide cofactor of the H protein. This is Probable glycine dehydrogenase (decarboxylating) subunit 1 from Saccharolobus islandicus (strain Y.N.15.51 / Yellowstone #2) (Sulfolobus islandicus).